The primary structure comprises 98 residues: NADH-ubiquinone oxidoreductase chain 4L (98 aa).

A run of 3 helical transmembrane segments spans residues 2 to 22 (LSISININLAFAAALLGMLMF), 29 to 49 (SLLCLEGMMLSMFILSTLIIL), and 61 to 81 (ILLLVFAACEAAIGLALLVMV).

This sequence belongs to the complex I subunit 4L family. In terms of assembly, core subunit of respiratory chain NADH dehydrogenase (Complex I) which is composed of 45 different subunits.

Its subcellular location is the mitochondrion inner membrane. The enzyme catalyses a ubiquinone + NADH + 5 H(+)(in) = a ubiquinol + NAD(+) + 4 H(+)(out). In terms of biological role, core subunit of the mitochondrial membrane respiratory chain NADH dehydrogenase (Complex I) which catalyzes electron transfer from NADH through the respiratory chain, using ubiquinone as an electron acceptor. Part of the enzyme membrane arm which is embedded in the lipid bilayer and involved in proton translocation. The sequence is that of NADH-ubiquinone oxidoreductase chain 4L (MT-ND4L) from Microcebus ravelobensis (Golden-brown mouse lemur).